The following is a 155-amino-acid chain: Small ribosomal subunit protein uS7 (155 aa).

It belongs to the universal ribosomal protein uS7 family. As to quaternary structure, part of the 30S ribosomal subunit. Contacts proteins S9 and S11.

One of the primary rRNA binding proteins, it binds directly to 16S rRNA where it nucleates assembly of the head domain of the 30S subunit. Is located at the subunit interface close to the decoding center, probably blocks exit of the E-site tRNA. The polypeptide is Small ribosomal subunit protein uS7 (Mycoplasmoides gallisepticum (strain R(low / passage 15 / clone 2)) (Mycoplasma gallisepticum)).